Consider the following 194-residue polypeptide: Small ribosomal subunit protein uS4c (194 aa).

The S4 RNA-binding domain maps to 84-144 (MRLDTLLYRT…KEILKSLNDK (61 aa)).

Belongs to the universal ribosomal protein uS4 family. As to quaternary structure, part of the 30S ribosomal subunit. Contacts protein S5. The interaction surface between S4 and S5 is involved in control of translational fidelity.

It localises to the plastid. Its subcellular location is the chloroplast. Functionally, one of the primary rRNA binding proteins, it binds directly to 16S rRNA where it nucleates assembly of the body of the 30S subunit. In terms of biological role, with S5 and S12 plays an important role in translational accuracy. This Bigelowiella natans (Pedinomonas minutissima) protein is Small ribosomal subunit protein uS4c (rps4).